The sequence spans 911 residues: DNA polymerase I (911 aa).

The 5'-3' exonuclease domain maps to 186–280; sequence VTPAQYPDLA…DTLRLQPWDR (95 aa). In terms of domain architecture, 3'-5' exonuclease spans 320-497; that stretch reads RGGLLESGTV…LAAALDAELD (178 aa).

Belongs to the DNA polymerase type-A family. Single-chain monomer with multiple functions.

It catalyses the reaction DNA(n) + a 2'-deoxyribonucleoside 5'-triphosphate = DNA(n+1) + diphosphate. Functionally, in addition to polymerase activity, this DNA polymerase exhibits 3'-5' and 5'-3' exonuclease activity. In Mycobacterium leprae (strain TN), this protein is DNA polymerase I (polA).